Here is a 346-residue protein sequence, read N- to C-terminus: Glucose-6-phosphatase 3 (346 aa).

Residues 1-24 (MESTLSAGIIMAEALQNRLPGLEN) lie on the Lumenal side of the membrane. The helical transmembrane segment at 25-45 (MWLWVTFLGDPKNLFQFCFPA) threads the bilayer. Over 46–56 (AYYASRRLGIS) the chain is Cytoplasmic. A helical membrane pass occupies residues 57 to 77 (VLWITFIAEWLNLVFKWFLFG). The Lumenal segment spans residues 78-108 (DRPFWWVHESGYSTQTPIQIHQFPSSCETGP). Residue Arg79 coordinates substrate. Residues 109–129 (GSPSGHCMITGAALWPVMTAI) form a helical membrane-spanning segment. His114 functions as the Proton donor in the catalytic mechanism. Topologically, residues 130–138 (SSQVASRSR) are cytoplasmic. A helical transmembrane segment spans residues 139–159 (SPWVRVIPGLAYCTFLLAVGL). Over 160-167 (SRVFLLAH) the chain is Lumenal. Position 161 (Arg161) interacts with substrate. Catalysis depends on His167, which acts as the Nucleophile. The chain crosses the membrane as a helical span at residues 168 to 186 (FPHQVLGGLIVGAALGWLM). At 187-197 (SPRVPMERELS) the chain is on the cytoplasmic side. A helical transmembrane segment spans residues 198–218 (FYGLTALALMLGASLMYWTLF). At 219 to 254 (TLGLDLSWSINLASKWCERPEWVHMDSRPFASLSRD) the chain is on the lumenal side. The chain crosses the membrane as a helical span at residues 255-273 (SGSALGLGIALHTPCYAQI). The Cytoplasmic segment spans residues 274–283 (RRAHLGNGQK). A helical transmembrane segment spans residues 284–304 (IACFVLAMGLLVFLEWLGYPP). Residues 305 to 307 (QIS) lie on the Lumenal side of the membrane. A helical membrane pass occupies residues 308 to 328 (LFYIFNFLKYTLWPCLVLALV). At 329-346 (PWVVHTLSDQEAPPIRSS) the chain is on the cytoplasmic side.

Belongs to the glucose-6-phosphatase family. As to expression, widely expressed. Highly expressed in heart and testis and to a lower extent in spleen, stomach, small intestine, skeletal muscle and uterus. Expressed in muscle, brain, thymus, lung, kidney, spleen and pancreas (at protein level). In the brain, expressed in astrocytes (at protein level).

The protein resides in the endoplasmic reticulum membrane. It catalyses the reaction D-glucose 6-phosphate + H2O = D-glucose + phosphate. It participates in carbohydrate biosynthesis; gluconeogenesis. Its activity is regulated as follows. Inhibited by vanadate. Its function is as follows. Hydrolyzes glucose-6-phosphate to glucose in the endoplasmic reticulum. May form with the glucose-6-phosphate transporter (SLC37A4/G6PT) a ubiquitously expressed complex responsible for glucose production through glycogenolysis and gluconeogenesis. Probably required for normal neutrophil function. This chain is Glucose-6-phosphatase 3 (G6pc3), found in Mus musculus (Mouse).